A 334-amino-acid chain; its full sequence is Meso-diaminopimelate D-dehydrogenase (334 aa).

NADP(+) contacts are provided by residues 16–19 (YGNL), 40–42 (TRR), 75–78 (CSGS), 98–100 (GFD), and 127–131 (CGWDP). Substrate-binding positions include D100, D130, W154, 160–161 (QG), T179, R205, H255, and N284.

Belongs to the diaminopimelate dehydrogenase family. As to quaternary structure, homodimer.

It catalyses the reaction meso-2,6-diaminopimelate + NADP(+) + H2O = (S)-2-amino-6-oxoheptanedioate + NH4(+) + NADPH + H(+). The protein operates within amino-acid biosynthesis; L-lysine biosynthesis via DAP pathway; DL-2,6-diaminopimelate from (S)-tetrahydrodipicolinate: step 1/1. Catalyzes the reversible NADPH-dependent reductive amination of L-2-amino-6-oxopimelate, the acyclic form of L-tetrahydrodipicolinate, to generate the meso compound, D,L-2,6-diaminopimelate. Probably plays a role in lysine biosynthesis. Exhibits a high substrate specificity for meso-2,6-diaminopimelate (m-DAP), since the activity with L,L-2,6-diaminopimelate is less than 5% of the activity observed with m-DAP. Can use NAD(+) only very poorly since the activity observed in the presence of NAD(+) is about 0.3% of that with NADP(+). This chain is Meso-diaminopimelate D-dehydrogenase (ddh), found in Acetivibrio thermocellus (strain ATCC 27405 / DSM 1237 / JCM 9322 / NBRC 103400 / NCIMB 10682 / NRRL B-4536 / VPI 7372) (Clostridium thermocellum).